Here is a 229-residue protein sequence, read N- to C-terminus: NAD(P)H-quinone oxidoreductase subunit K, chloroplastic (229 aa).

[4Fe-4S] cluster is bound by residues cysteine 43, cysteine 44, cysteine 108, and cysteine 139.

It belongs to the complex I 20 kDa subunit family. As to quaternary structure, NDH is composed of at least 16 different subunits, 5 of which are encoded in the nucleus. The cofactor is [4Fe-4S] cluster.

Its subcellular location is the plastid. It is found in the chloroplast thylakoid membrane. It carries out the reaction a plastoquinone + NADH + (n+1) H(+)(in) = a plastoquinol + NAD(+) + n H(+)(out). The enzyme catalyses a plastoquinone + NADPH + (n+1) H(+)(in) = a plastoquinol + NADP(+) + n H(+)(out). Its function is as follows. NDH shuttles electrons from NAD(P)H:plastoquinone, via FMN and iron-sulfur (Fe-S) centers, to quinones in the photosynthetic chain and possibly in a chloroplast respiratory chain. The immediate electron acceptor for the enzyme in this species is believed to be plastoquinone. Couples the redox reaction to proton translocation, and thus conserves the redox energy in a proton gradient. This chain is NAD(P)H-quinone oxidoreductase subunit K, chloroplastic, found in Piper cenocladum (Ant piper).